Here is a 157-residue protein sequence, read N- to C-terminus: Small ribosomal subunit protein uS7 (157 aa).

Belongs to the universal ribosomal protein uS7 family. In terms of assembly, part of the 30S ribosomal subunit. Contacts proteins S9 and S11.

Functionally, one of the primary rRNA binding proteins, it binds directly to 16S rRNA where it nucleates assembly of the head domain of the 30S subunit. Is located at the subunit interface close to the decoding center, probably blocks exit of the E-site tRNA. This chain is Small ribosomal subunit protein uS7, found in Chlamydia muridarum (strain MoPn / Nigg).